The following is a 72-amino-acid chain: UPF0270 protein YheU (72 aa).

Belongs to the UPF0270 family.

This Shigella dysenteriae serotype 1 (strain Sd197) protein is UPF0270 protein YheU.